A 400-amino-acid polypeptide reads, in one-letter code: Cytochrome b (400 aa).

The chain crosses the membrane as a helical span at residues 47–67; it reads LGSIAGIALVIQIITGVILAM. 2 residues coordinate heme b: histidine 97 and histidine 111. 8 helical membrane passes run 98–118, 131–151, 166–186, 194–214, 247–267, 306–326, 341–361, and 368–388; these read AVGA…GLYY, IGII…VLPW, FSAI…GFSV, FFSL…LHLV, FVGF…EPNY, LGGV…PWLD, IAFW…GQPA, and ISRF…PLIG. Heme b contacts are provided by histidine 198 and histidine 212.

The protein belongs to the cytochrome b family. In terms of assembly, the main subunits of complex b-c1 are: cytochrome b, cytochrome c1 and the Rieske protein. Heme b serves as cofactor.

It localises to the cell membrane. Component of the ubiquinol-cytochrome c reductase complex (complex III or cytochrome b-c1 complex), which is a respiratory chain that generates an electrochemical potential coupled to ATP synthesis. In Rickettsia bellii (strain RML369-C), this protein is Cytochrome b (petB).